Consider the following 213-residue polypeptide: Uridine kinase (213 aa).

An ATP-binding site is contributed by 15-22 (GASASGKS).

This sequence belongs to the uridine kinase family.

It localises to the cytoplasm. It carries out the reaction uridine + ATP = UMP + ADP + H(+). It catalyses the reaction cytidine + ATP = CMP + ADP + H(+). It functions in the pathway pyrimidine metabolism; CTP biosynthesis via salvage pathway; CTP from cytidine: step 1/3. It participates in pyrimidine metabolism; UMP biosynthesis via salvage pathway; UMP from uridine: step 1/1. This is Uridine kinase from Cronobacter sakazakii (strain ATCC BAA-894) (Enterobacter sakazakii).